Consider the following 463-residue polypeptide: Glycine--tRNA ligase (463 aa).

2 residues coordinate substrate: R100 and E175. ATP contacts are provided by residues 207–209 (RNE), 217–222 (FRTREF), 291–292 (EL), and 335–338 (GADR). Residue 222–226 (FEQME) coordinates substrate. 331-335 (EPSLG) contacts substrate.

Belongs to the class-II aminoacyl-tRNA synthetase family. In terms of assembly, homodimer.

The protein localises to the cytoplasm. It carries out the reaction tRNA(Gly) + glycine + ATP = glycyl-tRNA(Gly) + AMP + diphosphate. Functionally, catalyzes the attachment of glycine to tRNA(Gly). The protein is Glycine--tRNA ligase of Clostridium beijerinckii (strain ATCC 51743 / NCIMB 8052) (Clostridium acetobutylicum).